Reading from the N-terminus, the 100-residue chain is RxLR effector protein SFI8 (100 aa).

The N-terminal stretch at 1–22 (MRSILYAVLAFAVLARSSAVAA) is a signal peptide. The RxLR-dEER motif lies at 43–57 (RSLRVEAQEVIQSGR). Residues 78 to 82 (KPDIK) carry the Calmodulin-binding motif motif.

The protein belongs to the RxLR effector family. As to quaternary structure, interacts with the host calmodulin.

The protein resides in the secreted. The protein localises to the host nucleus. Its subcellular location is the host cytoplasm. Its function is as follows. Effector that suppresses flg22-induced post-translational MAP kinase activation both tomato and Arabidopsis. The perception of highly conserved pathogen- or microbe-associated molecular patterns (PAMPs/MAMPs), such as flg22, triggers converging signaling pathways recruiting MAP kinase cascades and inducing transcriptional re-programming, yielding a generic antimicrobial response. Associates with calmodulin to interfere with plant defense-associated calcium signaling in hosts. The chain is RxLR effector protein SFI8 from Phytophthora infestans (strain T30-4) (Potato late blight agent).